An 818-amino-acid polypeptide reads, in one-letter code: Auxin response factor 12 (818 aa).

The segment covering 1 to 10 (MSSSSAASIG) has biased composition (low complexity). The interval 1–24 (MSSSSAASIGPPQPPPPPAPPEEE) is disordered. Residues 11–20 (PPQPPPPPAP) show a composition bias toward pro residues. The TF-B3 DNA-binding region spans 135 to 237 (FCKTLTASDT…QLLLGIRRAS (103 aa)). 2 disordered regions span residues 526–565 (NDQKQKIQPDQSYQVPTSAVLPSPTSLPSHLREKFGFSDP) and 629–648 (GSVLHNSPTSKDGSVENKIG). Residues 629–640 (GSVLHNSPTSKD) are compositionally biased toward polar residues. The 85-residue stretch at 719-803 (RTFVKVYKSG…WYIKILSPED (85 aa)) folds into the PB1 domain.

Belongs to the ARF family. In terms of assembly, homodimers and heterodimers. Expressed in roots, culms, leaves and young panicles.

Its subcellular location is the nucleus. Functionally, auxin response factors (ARFs) are transcriptional factors that bind specifically to the DNA sequence 5'-TGTCTC-3' found in the auxin-responsive promoter elements (AuxREs). This is Auxin response factor 12 (ARF12) from Oryza sativa subsp. japonica (Rice).